A 290-amino-acid polypeptide reads, in one-letter code: Glycine--tRNA ligase alpha subunit (290 aa).

It belongs to the class-II aminoacyl-tRNA synthetase family. Tetramer of two alpha and two beta subunits.

It is found in the cytoplasm. It catalyses the reaction tRNA(Gly) + glycine + ATP = glycyl-tRNA(Gly) + AMP + diphosphate. This Gloeobacter violaceus (strain ATCC 29082 / PCC 7421) protein is Glycine--tRNA ligase alpha subunit.